Here is an 89-residue protein sequence, read N- to C-terminus: Small ribosomal subunit protein uS15 (89 aa).

It belongs to the universal ribosomal protein uS15 family. As to quaternary structure, part of the 30S ribosomal subunit. Forms a bridge to the 50S subunit in the 70S ribosome, contacting the 23S rRNA.

Its function is as follows. One of the primary rRNA binding proteins, it binds directly to 16S rRNA where it helps nucleate assembly of the platform of the 30S subunit by binding and bridging several RNA helices of the 16S rRNA. Functionally, forms an intersubunit bridge (bridge B4) with the 23S rRNA of the 50S subunit in the ribosome. This Methylorubrum populi (strain ATCC BAA-705 / NCIMB 13946 / BJ001) (Methylobacterium populi) protein is Small ribosomal subunit protein uS15.